The sequence spans 59 residues: Temporin-HN2 (59 aa).

An N-terminal signal peptide occupies residues 1–22; that stretch reads MFTLKKSLLLLLFLGTINLSLS. Residues 16-44 adopt a coiled-coil conformation; that stretch reads TINLSLSEQERDAKEERRDEMDVEVEKRN. Positions 23–41 are excised as a propeptide; sequence EQERDAKEERRDEMDVEVE. L57 carries the leucine amide modification.

Expressed by the skin glands.

It is found in the secreted. Its function is as follows. Has antimicrobial activity against some Gram-positive bacteria and fungi but has no activity against a range of Gram-negative bacteria except P.faecalis. Active against the Gram-positive bacteria S.aureus ATCC 25923 (MIC=4.8 uM), S.carnosus KHS (MIC=19 uM), B.licheniformis X39 (MIC=19 uM) and R.rhodochrous X15 (MIC=2.4 uM) but is inactive against E.faecium 091299 and E.faecalis 981. Has a less potent antimicrobial activity against the Gram-negative bacterium P.faecalis X29 (MIC=37.5 uM) and is inactive against E.coli, P.aeruginosa and S.typhi. Has antifungal activity against C.albicans ATCC 2002 (MIC=9.5 uM) and is also active against the slime mold 090223 (MIC=9.5 uM). Has extremely low hemolytic activity against human erythrocytes (LC(50)=300 uM). The sequence is that of Temporin-HN2 from Odorrana hainanensis (Odor frog).